The sequence spans 213 residues: Small ribosomal subunit protein uS4 (213 aa).

Positions 16-53 (GTDLGLKSGVKPYDVKTKKSARPPGQHGVSRNKSSEYS) are disordered. Residues 44–53 (VSRNKSSEYS) are compositionally biased toward polar residues. One can recognise an S4 RNA-binding domain in the interval 97–163 (SRLDNVVYRM…EKSREQLRIK (67 aa)).

Belongs to the universal ribosomal protein uS4 family. Part of the 30S ribosomal subunit. Contacts protein S5. The interaction surface between S4 and S5 is involved in control of translational fidelity.

One of the primary rRNA binding proteins, it binds directly to 16S rRNA where it nucleates assembly of the body of the 30S subunit. Functionally, with S5 and S12 plays an important role in translational accuracy. This Psychrobacter arcticus (strain DSM 17307 / VKM B-2377 / 273-4) protein is Small ribosomal subunit protein uS4.